A 494-amino-acid polypeptide reads, in one-letter code: UPF0371 protein SPJ_0333 (494 aa).

This sequence belongs to the UPF0371 family.

The sequence is that of UPF0371 protein SPJ_0333 from Streptococcus pneumoniae (strain JJA).